Consider the following 387-residue polypeptide: Acyltransferase MdmB (387 aa).

10 helical membrane-spanning segments follow: residues 8-28 (LPSLTGLRWFAALAVFACHIA), 45-65 (ITTLGSIAVSVFFLLSGFVLA), 85-105 (IYPLHLVTFLIAGVIIFSLAE), 139-161 (TPSWSLSCEFAFYLTFPLWYRLV), 170-190 (WWCAAGIAAAVICVPFVTSQF), 209-229 (CWLPPVRMLEFVLGIVMALIL), 236-256 (GPGVVSSALLLAAAYGVTQVV), 258-278 (PMFTIAACSIVPAALLITALA), 292-312 (AVLVRLGEWSFAFYLVHFMVI), and 336-356 (ALALAMLAVAIVAGGLLHTVV).

This sequence belongs to the acyltransferase 3 family.

It localises to the cell membrane. Functionally, catalyzes the acylation of the mycaminose sugar during midecamycin biosynthesis. The polypeptide is Acyltransferase MdmB (mdmB) (Streptomyces mycarofaciens).